A 312-amino-acid polypeptide reads, in one-letter code: Ribonuclease Z (312 aa).

Zn(2+) contacts are provided by H62, H64, D66, H67, H144, D215, and H273. D66 acts as the Proton acceptor in catalysis.

This sequence belongs to the RNase Z family. In terms of assembly, homodimer. Zn(2+) is required as a cofactor.

It carries out the reaction Endonucleolytic cleavage of RNA, removing extra 3' nucleotides from tRNA precursor, generating 3' termini of tRNAs. A 3'-hydroxy group is left at the tRNA terminus and a 5'-phosphoryl group is left at the trailer molecule.. In terms of biological role, zinc phosphodiesterase, which displays some tRNA 3'-processing endonuclease activity. Probably involved in tRNA maturation, by removing a 3'-trailer from precursor tRNA. This Prochlorococcus marinus (strain AS9601) protein is Ribonuclease Z.